Consider the following 146-residue polypeptide: Ribosomal RNA large subunit methyltransferase H (146 aa).

S-adenosyl-L-methionine is bound by residues Leu-60, Gly-93, and 112 to 117 (MGKMTL).

This sequence belongs to the RNA methyltransferase RlmH family. As to quaternary structure, homodimer.

Its subcellular location is the cytoplasm. The enzyme catalyses pseudouridine(1915) in 23S rRNA + S-adenosyl-L-methionine = N(3)-methylpseudouridine(1915) in 23S rRNA + S-adenosyl-L-homocysteine + H(+). Functionally, specifically methylates the pseudouridine at position 1915 (m3Psi1915) in 23S rRNA. This is Ribosomal RNA large subunit methyltransferase H from Koribacter versatilis (strain Ellin345).